The chain runs to 466 residues: Cysteine--tRNA ligase (466 aa).

C28 lines the Zn(2+) pocket. The short motif at 30–40 (PTVYNYIHIGN) is the 'HIGH' region element. Residues C208, H233, and E237 each coordinate Zn(2+). A 'KMSKS' region motif is present at residues 265–269 (KMSKS). K268 contributes to the ATP binding site.

The protein belongs to the class-I aminoacyl-tRNA synthetase family. In terms of assembly, monomer. Zn(2+) is required as a cofactor.

The protein localises to the cytoplasm. It catalyses the reaction tRNA(Cys) + L-cysteine + ATP = L-cysteinyl-tRNA(Cys) + AMP + diphosphate. The chain is Cysteine--tRNA ligase from Staphylococcus carnosus (strain TM300).